A 61-amino-acid chain; its full sequence is Photosystem II reaction center protein K (61 aa).

The propeptide occupies M1–A24. The helical transmembrane segment at I32–F52 threads the bilayer.

It belongs to the PsbK family. In terms of assembly, PSII is composed of 1 copy each of membrane proteins PsbA, PsbB, PsbC, PsbD, PsbE, PsbF, PsbH, PsbI, PsbJ, PsbK, PsbL, PsbM, PsbT, PsbX, PsbY, PsbZ, Psb30/Ycf12, at least 3 peripheral proteins of the oxygen-evolving complex and a large number of cofactors. It forms dimeric complexes. Detected in both etioplasts and green leaves; PSII is only assembled in green leaves.

The protein localises to the plastid. The protein resides in the chloroplast thylakoid membrane. Its function is as follows. One of the components of the core complex of photosystem II (PSII). PSII is a light-driven water:plastoquinone oxidoreductase that uses light energy to abstract electrons from H(2)O, generating O(2) and a proton gradient subsequently used for ATP formation. It consists of a core antenna complex that captures photons, and an electron transfer chain that converts photonic excitation into a charge separation. The sequence is that of Photosystem II reaction center protein K from Hordeum vulgare (Barley).